The following is a 304-amino-acid chain: Ribosomal RNA small subunit methyltransferase H (304 aa).

S-adenosyl-L-methionine is bound by residues 47 to 49, D66, F93, D108, and Q115; that span reads GGH.

Belongs to the methyltransferase superfamily. RsmH family.

It is found in the cytoplasm. It carries out the reaction cytidine(1402) in 16S rRNA + S-adenosyl-L-methionine = N(4)-methylcytidine(1402) in 16S rRNA + S-adenosyl-L-homocysteine + H(+). In terms of biological role, specifically methylates the N4 position of cytidine in position 1402 (C1402) of 16S rRNA. This chain is Ribosomal RNA small subunit methyltransferase H, found in Prochlorococcus marinus (strain NATL2A).